Reading from the N-terminus, the 93-residue chain is Small ribosomal subunit protein uS19c (93 aa).

This sequence belongs to the universal ribosomal protein uS19 family.

Its subcellular location is the plastid. It is found in the chloroplast. Its function is as follows. Protein S19 forms a complex with S13 that binds strongly to the 16S ribosomal RNA. This Oryza nivara (Indian wild rice) protein is Small ribosomal subunit protein uS19c.